Consider the following 886-residue polypeptide: Cadherin-1 (886 aa).

An N-terminal signal peptide occupies residues 1–23 (MGARCRSFSALLLLLQVSSWLCQ). A propeptide spanning residues 24–158 (QPESESDSCR…FHQGLRRQKR (135 aa)) is cleaved from the precursor. Residues 24 to 713 (QPESESDSCR…SLEAGLQVPA (690 aa)) are Extracellular-facing. Cadherin domains follow at residues 159 to 266 (DWVI…RPEF), 267 to 379 (IQEV…APIF), 380 to 490 (NPST…APIF), 491 to 597 (VPAE…DNAP), and 598 to 701 (IPEP…NCMK). Ca(2+) is bound at residue Asp-261. O-linked (Man...) serine glycosylation is found at Ser-284 and Ser-289. Asp-292 lines the Ca(2+) pocket. Thr-362, Thr-474, Thr-476, and Thr-513 each carry an O-linked (Man...) threonine glycan. N-linked (GlcNAc...) asparagine glycosylation occurs at Asn-562. Residues Thr-580, Thr-582, and Thr-584 are each glycosylated (O-linked (Man...) threonine). N-linked (GlcNAc...) asparagine glycosylation occurs at Asn-641. Residues 714 to 734 (ILGILGGILALLILILLLLLF) traverse the membrane as a helical segment. At 735 to 886 (LRRRTVVKEP…ADMYGGGEED (152 aa)) the chain is on the cytoplasmic side. The tract at residues 751-771 (DTRDNVYYYDEEGGGEEDQDF) is disordered. 3 positions are modified to phosphotyrosine; by SRC: Tyr-757, Tyr-758, and Tyr-759. The segment covering 759–771 (YDEEGGGEEDQDF) has biased composition (acidic residues). The required for binding CTNND1 and PSEN1 stretch occupies residues 762–773 (EGGGEEDQDFDL). A phosphoserine mark is found at Ser-774, Ser-797, Ser-842, Ser-844, and Ser-850. The tract at residues 815–886 (IDENLKAADS…ADMYGGGEED (72 aa)) is required for binding alpha, beta and.

In terms of assembly, homodimer; disulfide-linked. Component of an E-cadherin/ catenin adhesion complex composed of at least E-cadherin/CDH1, beta-catenin/CTNNB1 or gamma-catenin/JUP, and potentially alpha-catenin/CTNNA1; the complex is located to adherens junctions. Found in a complex composed of CDH1, RAP1A and PKP3; PKP3 acts as a scaffold protein within the complex, the complex is required for CDH1 localization to mature desmosome cell junctions. Interacts with the TRPV4 and CTNNB1 complex. Interacts with CTNND1. The stable association of CTNNA1 is controversial as CTNNA1 was shown not to bind to F-actin when assembled in the complex. Alternatively, the CTNNA1-containing complex may be linked to F-actin by other proteins such as LIMA1. Interaction with PSEN1, cleaves CDH1 resulting in the disassociation of cadherin-based adherens junctions (CAJs). Interacts with AJAP1 and DLGAP5. Interacts with TBC1D2. Interacts with LIMA1. Interacts with CAV1. Interacts with PIP5K1C. Interacts with DDR1; this stabilizes CDH1 at the cell surface and inhibits its internalization. Interacts with RAPGEF2. Interacts with RAB8B. Interacts with KLRG1. Forms a ternary complex composed of ADAM10, CADH1 and EPHA4; within the complex, CADH1 is cleaved by ADAM10 which disrupts adherens junctions. Interacts with SPEF1. Interacts with CTNNB1 and PKP2. Interacts with AMOTL2; the interaction may facilitate binding of radial actin fibers to cell junction complexes. Interacts with DSG3; the interaction is required for CDH1 localization to developing adherens junctions. During apoptosis or with calcium influx, cleaved by a membrane-bound metalloproteinase (ADAM10), PS1/gamma-secretase and caspase-3. Processing by the metalloproteinase, induced by calcium influx, causes disruption of cell-cell adhesion and the subsequent release of beta-catenin into the cytoplasm. The residual membrane-tethered cleavage product is rapidly degraded via an intracellular proteolytic pathway. Cleavage by caspase-3 releases the cytoplasmic tail resulting in disintegration of the actin microfilament system. The gamma-secretase-mediated cleavage promotes disassembly of adherens junctions. During development of the cochlear organ of Corti, cleavage by ADAM10 at adherens junctions promotes pillar cell separation. Post-translationally, N-glycosylation at Asn-641 is essential for expression, folding and trafficking. Addition of bisecting N-acetylglucosamine by MGAT3 modulates its cell membrane location. In terms of processing, ubiquitinated by a SCF complex containing SKP2, which requires prior phosphorylation by CK1/CSNK1A1. Ubiquitinated by CBLL1/HAKAI, requires prior phosphorylation at Tyr-758. O-glycosylated. O-manosylated by TMTC1, TMTC2, TMTC3 or TMTC4. Ser-289 and Thr-513 are O-manosylated by TMTC2 or TMTC4 but not TMTC1 or TMTC3.

It localises to the cell junction. The protein localises to the adherens junction. The protein resides in the cell membrane. It is found in the endosome. Its subcellular location is the golgi apparatus. It localises to the trans-Golgi network. The protein localises to the cytoplasm. The protein resides in the desmosome. Its function is as follows. Cadherins are calcium-dependent cell adhesion proteins. They preferentially interact with themselves in a homophilic manner in connecting cells; cadherins may thus contribute to the sorting of heterogeneous cell types. CDH1 is involved in mechanisms regulating cell-cell adhesions, mobility and proliferation of epithelial cells. Promotes organization of radial actin fiber structure and cellular response to contractile forces, via its interaction with AMOTL2 which facilitates anchoring of radial actin fibers to CDH1 junction complexes at the cell membrane. Plays a role in the early stages of desmosome cell-cell junction formation via facilitating the recruitment of DSG2 and DSP to desmosome plaques. Has a potent invasive suppressor role. It is a ligand for integrin alpha-E/beta-7. Functionally, E-Cad/CTF2 promotes non-amyloidogenic degradation of Abeta precursors. Has a strong inhibitory effect on APP C99 and C83 production. The chain is Cadherin-1 (Cdh1) from Rattus norvegicus (Rat).